We begin with the raw amino-acid sequence, 692 residues long: Elongation factor G 2 (692 aa).

One can recognise a tr-type G domain in the interval 8–283 (EKTRNIGIMA…AVIDYMPSPV (276 aa)). GTP is bound by residues 17–24 (AHIDAGKT), 81–85 (DTPGH), and 135–138 (NKMD).

It belongs to the TRAFAC class translation factor GTPase superfamily. Classic translation factor GTPase family. EF-G/EF-2 subfamily.

It localises to the cytoplasm. In terms of biological role, catalyzes the GTP-dependent ribosomal translocation step during translation elongation. During this step, the ribosome changes from the pre-translocational (PRE) to the post-translocational (POST) state as the newly formed A-site-bound peptidyl-tRNA and P-site-bound deacylated tRNA move to the P and E sites, respectively. Catalyzes the coordinated movement of the two tRNA molecules, the mRNA and conformational changes in the ribosome. The polypeptide is Elongation factor G 2 (Syntrophotalea carbinolica (strain DSM 2380 / NBRC 103641 / GraBd1) (Pelobacter carbinolicus)).